A 660-amino-acid polypeptide reads, in one-letter code: GTP-binding protein BRASSINAZOLE INSENSITIVE PALE GREEN 2, chloroplastic (660 aa).

A chloroplast-targeting transit peptide spans 1–53; that stretch reads MVVLISSTVTICNVKPKLEDGNFRVSRLIHRPEVPFFSGLSNEKKKKCAVSVM. Disordered regions lie at residues 127–158 and 191–212; these read EGDE…DDEM and NDVE…TEEK. Over residues 130 to 158 the composition is skewed to acidic residues; it reads EHVENDELAGFEMVDDDADEEEEGEDDEM. In terms of domain architecture, CP-type G spans 273-457; sequence STRLIKPMSN…MYDTPGLLHP (185 aa).

The protein belongs to the TRAFAC class YlqF/YawG GTPase family. As to quaternary structure, binds to chloroplast 16S and 23S ribosomal RNAs. In terms of tissue distribution, mostly expressed in stems, petioles, leaves and flowers and, at low levels, also in roots.

It localises to the plastid. The protein localises to the chloroplast stroma. Its function is as follows. Required for brassinosteroid- (BR) mediated post-transcriptional and translational regulation in the chloroplast, including accumulation of chloroplast rRNA. Involved in chloroplast differentiation. The chain is GTP-binding protein BRASSINAZOLE INSENSITIVE PALE GREEN 2, chloroplastic from Arabidopsis thaliana (Mouse-ear cress).